The following is a 1844-amino-acid chain: ATPase family AAA domain-containing protein 5 (1844 aa).

Phosphoserine is present on Ser-44. Residue Lys-127 forms a Glycyl lysine isopeptide (Lys-Gly) (interchain with G-Cter in SUMO2) linkage. Polar residues predominate over residues 178–199; the sequence is QPNTMTSLQNSKKVNPKQGTTK. The tract at residues 178-204 is disordered; sequence QPNTMTSLQNSKKVNPKQGTTKNDFKK. Phosphoserine occurs at positions 219, 306, 311, 354, and 369. The tract at residues 368 to 384 is interaction with WDR48; that stretch reads KSNVVIQEEELELAVLE. 3 disordered regions span residues 477–499, 580–623, and 658–700; these read KLKK…REGN, ESEA…NSQL, and KFTR…SKNI. Polar residues-rich tracts occupy residues 580-592 and 599-608; these read ESEA…STPK and RISSTPTTET. 3 positions are modified to phosphoserine: Ser-602, Ser-614, and Ser-621. Residues 664–673 show a composition bias toward basic residues; sequence TPKKSKKKSN. Over residues 685-700 the composition is skewed to polar residues; the sequence is GFTSQIRKASNTSKNI. Ser-817 carries the post-translational modification Phosphoserine. 2 stretches are compositionally biased toward basic and acidic residues: residues 987–1032 and 1092–1106; these read LEAD…ELSK and RQNL…HEDF. Disordered stretches follow at residues 987 to 1047 and 1092 to 1118; these read LEAD…SKDS and RQNL…SSDD. A Phosphoserine modification is found at Ser-1116. 1132-1139 is a binding site for ATP; it reads GPTGVGKT. Disordered stretches follow at residues 1203–1235 and 1272–1292; these read KKIS…LPPK and ITQT…GAEE. Over residues 1272-1285 the composition is skewed to polar residues; that stretch reads ITQTKSTNATNSNV. An LXCXE motif motif is present at residues 1428–1432; that stretch reads LVCSE. Positions 1591 to 1635 are disordered; sequence SLSSVSSSSNAEESKTGDEESKARDKGNNPETKKSIPCPPKTTAG. Residues 1602-1624 are compositionally biased toward basic and acidic residues; it reads EESKTGDEESKARDKGNNPETKK. Positions 1630–1719 are interaction with RAD51 and RFC5; the sequence is PKTTAGKKCS…AAAEALSFTK (90 aa).

The protein belongs to the AAA ATPase family. Component of a heteropentameric replication factor ATAD5 RFC-like complex composed of one large subunit (ATAD5) and four small subunits (RFC2, RFC3, RFC4 and RFC5). Within the ATAD5 RFC-like complex, interacts with RFC2, RFC4 and RFC5. Within the ATAD5 RFC-like complex, interacts directly via-N terminal with RAD51; the interactions is enhanced under replication stress. Interacts with RB1 predominantly in G1 phase via its LXCXE motif. Interacts with RAD9A in growing cells. The interaction with RAD9A is reduced after exposure to DNA replication-inhibiting agents. Interacts with BRD4. Interacts with PCNA. Interacts with deubiquitinating enzyme USP1, and its associated factor, WDR48. Post-translationally, ATR may stimulate the RAD9A dissociation.

It localises to the nucleus. Its function is as follows. Has an important role in DNA replication and in maintaining genome integrity during replication stress. Involved in a RAD9A-related damage checkpoint, a pathway that is important in determining whether DNA damage is compatible with cell survival or whether it requires cell elimination by apoptosis. Modulates the RAD9A interaction with BCL2 and thereby induces DNA damage-induced apoptosis. Promotes PCNA deubiquitination by recruiting the ubiquitin-specific protease 1 (USP1) and WDR48 thereby down-regulating the error-prone damage bypass pathway. As component of the ATAD5 RFC-like complex, regulates the function of the DNA polymerase processivity factor PCNA by unloading the ring-shaped PCNA homotrimer from DNA after replication during the S phase of the cell cycle. This seems to be dependent on its ATPase activity. Plays important roles in restarting stalled replication forks under replication stress, by unloading the PCNA homotrimer from DNA and recruiting RAD51 possibly through an ATR-dependent manner. Ultimately this enables replication fork regression, breakage, and eventual fork restart. Both the PCNA unloading activity and the interaction with WDR48 are required to efficiently recruit RAD51 to stalled replication forks. Promotes the generation of MUS81-mediated single-stranded DNA-associated breaks in response to replication stress, which is an alternative pathway to restart stalled/regressed replication forks. The chain is ATPase family AAA domain-containing protein 5 from Homo sapiens (Human).